Consider the following 497-residue polypeptide: 3-octaprenyl-4-hydroxybenzoate carboxy-lyase (497 aa).

Asn-175 provides a ligand contact to Mn(2+). Prenylated FMN is bound by residues 178–180 (IYR), 192–194 (RWL), and 197–198 (RG). Glu-241 is a Mn(2+) binding site. The active-site Proton donor is Asp-290.

This sequence belongs to the UbiD family. As to quaternary structure, homohexamer. Requires prenylated FMN as cofactor. Mn(2+) serves as cofactor.

It is found in the cell membrane. It carries out the reaction a 4-hydroxy-3-(all-trans-polyprenyl)benzoate + H(+) = a 2-(all-trans-polyprenyl)phenol + CO2. It functions in the pathway cofactor biosynthesis; ubiquinone biosynthesis. Functionally, catalyzes the decarboxylation of 3-octaprenyl-4-hydroxy benzoate to 2-octaprenylphenol, an intermediate step in ubiquinone biosynthesis. The sequence is that of 3-octaprenyl-4-hydroxybenzoate carboxy-lyase from Shigella dysenteriae serotype 1 (strain Sd197).